The following is a 521-amino-acid chain: Insulinoma-associated protein 1 (521 aa).

Residues 1-12 are compositionally biased toward basic residues; the sequence is MPRGFLVKRSKK. An SNAG domain region spans residues 1–20; sequence MPRGFLVKRSKKSTPVSYRV. 3 disordered regions span residues 1–59, 76–107, and 180–230; these read MPRG…PPAL, GPPP…PTRP, and AEAA…KPKA. Positions 2–7 are required and sufficient for interaction with KDM1A; it reads PRGFLV. The segment at 43–56 is necessary for interaction with CCND1; it reads PPVPSPGPLPPPPP. Composition is skewed to pro residues over residues 43-58 and 76-85; these read PPVP…PPPA and GPPPPPPPGP. Low complexity predominate over residues 209–223; it reads AAVATEPPAKAAKAP. The C2H2-type 1; atypical zinc finger occupies 272 to 292; sequence FICQLCKEEYADPFALAQHKC. The segment at 300–322 adopts a C2H2-type 2 zinc-finger fold; sequence YRCPECAKVFSCPANLASHRRWH. Positions 320-369 are disordered; sequence RWHKPRPVPAAARAPEPEAATRAEAREAAGGGSSDRDTPSPGGVSESGSE. Residues 334–346 are compositionally biased toward basic and acidic residues; the sequence is PEPEAATRAEARE. A C2H2-type 3 zinc finger spans residues 373-395; sequence YECHHCAKKFRRQAYLRKHLLAH. Positions 398–419 are disordered; that stretch reads ALQAKGAPPPPPPPPPPAEDIL. A compositionally biased stretch (pro residues) spans 404–415; it reads APPPPPPPPPPA. 2 C2H2-type zinc fingers span residues 452–475 and 480–503; these read HLCP…RLLH and FPCK…NKCH.

Belongs to the INSM1 family. Interacts (via the N-terminal region) with CCND1 (via cyclin N-terminal domain); the interaction competes with the binding of CCND1 to CDK4 during cell cycle progression and increases its transcriptional repressor activity. Interacts with HDAC3; the interaction increases its transcriptional repressor activity. Interacts (via the SNAG domain) with HDAC1. Interacts (via the SNAG domain) with HDAC2. Interacts (via the SNAG domain) with KDM1A. Interacts (via the SNAG domain) with RCOR1. Interacts with SORBS1. Expressed in adrenal gland. Expressed in the dentate gyrus of the hippocampus and the wall of the lateral ventricle. Expressed in pancreatic and intestinal endocrine cells.

The protein resides in the nucleus. Functionally, sequence-specific DNA-binding transcriptional regulator that plays a key role in neurogenesis and neuroendocrine cell differentiation during embryonic and/or fetal development. Binds to the consensus sequence 5'-[TG][TC][TC][TT][GA]GGG[CG]A-3' in target promoters. Acts as a transcriptional repressor of NEUROD1 and INS expression via its interaction with cyclin CCND1 in a cell cycle-independent manner. Negatively regulates skeletal muscle-specific gene expression in endocrine cells of the pituitary by inhibiting the Notch signaling pathway. Represses target gene transcription by recruiting chromatin-modifying factors, such as HDAC1, HDAC2, HDAC3, KDM1A and RCOR1 histone deacetylases. Binds to its own promoter, suggesting autoregulation as a self-control feedback mechanism. Competes with histone H3 for the same binding site on the histone demethylase complex formed by KDM1A and RCOR1, and thereby inhibits demethylation of histone H3 at 'Lys-4'. Promotes the generation and expansion of neuronal basal progenitor cells in the developing neocortex. Involved in the differentiation of endocrine cells of the developing anterior pituitary gland, of the pancreas and intestine, and of sympatho-adrenal cells in the peripheral nervous system. Promotes cell cycle signaling arrest and inhibition of cellular proliferation. The sequence is that of Insulinoma-associated protein 1 (Insm1) from Mus musculus (Mouse).